Here is a 220-residue protein sequence, read N- to C-terminus: MKLNKYIDHTLLKPEASEEQILKLIEEAKVYDFASICVNPTWIEFAAEQLKGSDVKVCVPIGFPLGANTSDVKAFETKDAIQKGAGEVDMVINVGALKSKNYDLVERDIRAVVEAANGTLVKVILETCLLTDEEKVKACQLAQKAGADFVKTSTGFSTGGATVEDVALMRKTVGPDMGVKASGGARSYEDALAFIEAGATRIGTSAGVAIMKGEEASGDY.

Aspartate 89 (proton donor/acceptor) is an active-site residue. Catalysis depends on lysine 151, which acts as the Schiff-base intermediate with acetaldehyde. The active-site Proton donor/acceptor is the lysine 180.

It belongs to the DeoC/FbaB aldolase family. DeoC type 1 subfamily.

The protein resides in the cytoplasm. It catalyses the reaction 2-deoxy-D-ribose 5-phosphate = D-glyceraldehyde 3-phosphate + acetaldehyde. The protein operates within carbohydrate degradation; 2-deoxy-D-ribose 1-phosphate degradation; D-glyceraldehyde 3-phosphate and acetaldehyde from 2-deoxy-alpha-D-ribose 1-phosphate: step 2/2. Its function is as follows. Catalyzes a reversible aldol reaction between acetaldehyde and D-glyceraldehyde 3-phosphate to generate 2-deoxy-D-ribose 5-phosphate. The chain is Deoxyribose-phosphate aldolase from Streptococcus sanguinis (strain SK36).